The primary structure comprises 445 residues: tRNA-2-methylthio-N(6)-dimethylallyladenosine synthase (445 aa).

Positions 7–121 constitute an MTTase N-terminal domain; sequence KTFYIETFGC…LPEMLVQLEA (115 aa). [4Fe-4S] cluster contacts are provided by cysteine 16, cysteine 52, cysteine 84, cysteine 158, cysteine 162, and cysteine 165. The 231-residue stretch at 144 to 374 folds into the Radical SAM core domain; that stretch reads RDNPHRAYLT…QEKQRAIQIR (231 aa). The TRAM domain occupies 377-443; that stretch reads AEMIGSIQEV…PNSLVGESAA (67 aa).

It belongs to the methylthiotransferase family. MiaB subfamily. Monomer. [4Fe-4S] cluster is required as a cofactor.

The protein localises to the cytoplasm. The enzyme catalyses N(6)-dimethylallyladenosine(37) in tRNA + (sulfur carrier)-SH + AH2 + 2 S-adenosyl-L-methionine = 2-methylsulfanyl-N(6)-dimethylallyladenosine(37) in tRNA + (sulfur carrier)-H + 5'-deoxyadenosine + L-methionine + A + S-adenosyl-L-homocysteine + 2 H(+). Its function is as follows. Catalyzes the methylthiolation of N6-(dimethylallyl)adenosine (i(6)A), leading to the formation of 2-methylthio-N6-(dimethylallyl)adenosine (ms(2)i(6)A) at position 37 in tRNAs that read codons beginning with uridine. The polypeptide is tRNA-2-methylthio-N(6)-dimethylallyladenosine synthase (Solibacter usitatus (strain Ellin6076)).